We begin with the raw amino-acid sequence, 232 residues long: MSSDIHQIKIGLTDNHPCSYLPERKERVAVALEADMHTADNYEVLLANGFRRSGNTIYKPHCDSCHSCQPIRISVPDIELSRSQKRLLAKARSLSWSMKRNMDENWFDLYSRYIVARHRNGTMYPPKKDDFAHFSRNQWLTTQFLHIYEGQRLIAVAVTDIMDHCASAFYTFFEPEHELSLGTLAVLFQLEFCQEEKKQWLYLGYQIDECPAMNYKVRFHRHQKLVNQRWQG.

It belongs to the R-transferase family. Bpt subfamily.

It is found in the cytoplasm. It catalyses the reaction N-terminal L-glutamyl-[protein] + L-leucyl-tRNA(Leu) = N-terminal L-leucyl-L-glutamyl-[protein] + tRNA(Leu) + H(+). It carries out the reaction N-terminal L-aspartyl-[protein] + L-leucyl-tRNA(Leu) = N-terminal L-leucyl-L-aspartyl-[protein] + tRNA(Leu) + H(+). In terms of biological role, functions in the N-end rule pathway of protein degradation where it conjugates Leu from its aminoacyl-tRNA to the N-termini of proteins containing an N-terminal aspartate or glutamate. The sequence is that of Aspartate/glutamate leucyltransferase from Vibrio vulnificus (strain CMCP6).